A 115-amino-acid polypeptide reads, in one-letter code: T cell receptor beta variable 11-2 (115 aa).

The N-terminal stretch at 1-21 (MGTRLLCWAALCLLGAELTEA) is a signal peptide. Residues 22–115 (GVAQSPRYKI…SAVYLCASSL (94 aa)) form the Ig-like domain. A disulfide bridge links Cys42 with Cys111.

As to quaternary structure, alpha-beta TR is a heterodimer composed of an alpha and beta chain; disulfide-linked. The alpha-beta TR is associated with the transmembrane signaling CD3 coreceptor proteins to form the TR-CD3 (TcR or TCR). The assembly of alpha-beta TR heterodimers with CD3 occurs in the endoplasmic reticulum where a single alpha-beta TR heterodimer associates with one CD3D-CD3E heterodimer, one CD3G-CD3E heterodimer and one CD247 homodimer forming a stable octameric structure. CD3D-CD3E and CD3G-CD3E heterodimers preferentially associate with TR alpha and TR beta chains, respectively. The association of the CD247 homodimer is the last step of TcR assembly in the endoplasmic reticulum and is required for transport to the cell surface.

The protein resides in the cell membrane. V region of the variable domain of T cell receptor (TR) beta chain that participates in the antigen recognition. Alpha-beta T cell receptors are antigen specific receptors which are essential to the immune response and are present on the cell surface of T lymphocytes. Recognize peptide-major histocompatibility (MH) (pMH) complexes that are displayed by antigen presenting cells (APC), a prerequisite for efficient T cell adaptive immunity against pathogens. Binding of alpha-beta TR to pMH complex initiates TR-CD3 clustering on the cell surface and intracellular activation of LCK that phosphorylates the ITAM motifs of CD3G, CD3D, CD3E and CD247 enabling the recruitment of ZAP70. In turn ZAP70 phosphorylates LAT, which recruits numerous signaling molecules to form the LAT signalosome. The LAT signalosome propagates signal branching to three major signaling pathways, the calcium, the mitogen-activated protein kinase (MAPK) kinase and the nuclear factor NF-kappa-B (NF-kB) pathways, leading to the mobilization of transcription factors that are critical for gene expression and essential for T cell growth and differentiation. The T cell repertoire is generated in the thymus, by V-(D)-J rearrangement. This repertoire is then shaped by intrathymic selection events to generate a peripheral T cell pool of self-MH restricted, non-autoaggressive T cells. Post-thymic interaction of alpha-beta TR with the pMH complexes shapes TR structural and functional avidity. The protein is T cell receptor beta variable 11-2 of Homo sapiens (Human).